A 147-amino-acid chain; its full sequence is Large ribosomal subunit protein uL16 (147 aa).

It belongs to the universal ribosomal protein uL16 family. Part of the 50S ribosomal subunit.

Its function is as follows. Binds 23S rRNA and is also seen to make contacts with the A and possibly P site tRNAs. This is Large ribosomal subunit protein uL16 from Finegoldia magna (strain ATCC 29328 / DSM 20472 / WAL 2508) (Peptostreptococcus magnus).